The chain runs to 389 residues: Capsule polysaccharide export protein KpsS (389 aa).

The sequence is that of Capsule polysaccharide export protein KpsS (kpsS) from Escherichia coli.